Consider the following 139-residue polypeptide: Putative lipoprotein MIP_01412 (139 aa).

The signal sequence occupies residues Met1–Ala19. Cys20 is lipidated: N-palmitoyl cysteine. A lipid anchor (S-diacylglycerol cysteine) is attached at Cys20.

The protein belongs to the mycobacterial 19 kDa antigen family.

It is found in the cell membrane. This Mycobacterium indicus pranii (strain DSM 45239 / MTCC 9506) protein is Putative lipoprotein MIP_01412.